A 384-amino-acid polypeptide reads, in one-letter code: Probable protein phosphatase 2C 42 (384 aa).

Residues 58–358 form the PPM-type phosphatase domain; that stretch reads DFSMAVIQAN…DDITVIVVFL (301 aa). Residues aspartate 89, glycine 90, aspartate 290, and aspartate 349 each coordinate Mn(2+).

This sequence belongs to the PP2C family. Requires Mg(2+) as cofactor. The cofactor is Mn(2+).

The catalysed reaction is O-phospho-L-seryl-[protein] + H2O = L-seryl-[protein] + phosphate. It catalyses the reaction O-phospho-L-threonyl-[protein] + H2O = L-threonyl-[protein] + phosphate. In terms of biological role, dephosphorylates and represses plasma membrane H(+)-ATPases (PM H(+)-ATPases, e.g. AHA1 and AHA2), thus influencing negatively plant growth and fitness. Promotes the apical hook maintenance of etiolated seedlings. The sequence is that of Probable protein phosphatase 2C 42 from Arabidopsis thaliana (Mouse-ear cress).